The primary structure comprises 114 residues: Large ribosomal subunit protein P2 (114 aa).

The segment at 84–114 (TDALQAGSKKGETKEGPKEESDEDMGFGLFD) is disordered. Residues 92 to 102 (KKGETKEGPKE) show a composition bias toward basic and acidic residues.

This sequence belongs to the eukaryotic ribosomal protein P1/P2 family. In terms of assembly, P1 and P2 exist as dimers at the large ribosomal subunit. Phosphorylated.

Plays an important role in the elongation step of protein synthesis. This is Large ribosomal subunit protein P2 (rpp-2) from Brugia malayi (Filarial nematode worm).